A 150-amino-acid chain; its full sequence is Large ribosomal subunit protein eL19 (150 aa).

The segment at 56–90 (RGISSGRLKERKHKRRSKGEGRKHGSRKGKSGART) is disordered.

The protein belongs to the eukaryotic ribosomal protein eL19 family. As to quaternary structure, part of the 50S ribosomal subunit.

Its function is as follows. Binds to the 23S rRNA. The protein is Large ribosomal subunit protein eL19 of Sulfolobus acidocaldarius (strain ATCC 33909 / DSM 639 / JCM 8929 / NBRC 15157 / NCIMB 11770).